A 198-amino-acid chain; its full sequence is V-type proton ATPase subunit E (198 aa).

The protein belongs to the V-ATPase E subunit family.

Produces ATP from ADP in the presence of a proton gradient across the membrane. This is V-type proton ATPase subunit E from Borrelia turicatae (strain 91E135).